A 302-amino-acid chain; its full sequence is Syntaxin-17 (302 aa).

Position 2 is an N-acetylserine (serine 2). Residues 2 to 228 (SEDEEKVKLR…KNLGKAAKYK (227 aa)) are Cytoplasmic-facing. The residue at position 41 (lysine 41) is an N6-acetyllysine. A coiled-coil region spans residues 53–123 (EEHINAGRTV…EELKKQFNDE (71 aa)). At tyrosine 157 the chain carries Phosphotyrosine; by ABL1. The 63-residue stretch at 162 to 224 (IPRDQNAAES…EEGTKNLGKA (63 aa)) folds into the t-SNARE coiled-coil homology domain. Residues 229 to 249 (LAALPVAGALIGGVVGGPIGL) form a helical membrane-spanning segment. A necessary and sufficient for localization to autophagosome region spans residues 229–275 (LAALPVAGALIGGVVGGPIGLLAGFKVAGIAAALGGGVLGFTGGKLI). The Lumenal portion of the chain corresponds to 250–254 (LAGFK). A helical transmembrane segment spans residues 255-275 (VAGIAAALGGGVLGFTGGKLI). At 276 to 302 (QRRKQKMMEKLASSCPDLPSQTDKKCS) the chain is on the cytoplasmic side. Serine 289 carries the phosphoserine modification. Positions 299 to 302 (KKCS) match the Endoplasmic reticulum retention signal motif.

The protein belongs to the syntaxin family. In terms of assembly, forms a SNARE complex composed of VAMP8, SNAP29 and STX17 involved in fusion of autophagosome with lysosome. May interact with VTI1B. Probably interacts with BET1, SCFD1 and SEC22B. Interacts with PTPN2 and ABL1; involved in STX17 phosphorylation. Interacts with COPB1. Interacts with TMED9 and TMED10; the interaction is direct. Interacts with VAMP7. Interacts with RUBCNL/PACER; promoting targeting of RUBCNL/PACER to autophagosome. Interacts with VAMP8, SNAP29, VPS39 and VPS41; these interactions are increased in the absence of TMEM39A. Interacts with IRGM; promoting STX17 recruitment to autophagosomes. Interacts with ATG8 proteins GABARAP and MAP1LC3B. Interacts with RNF115; this interaction enhances STX17 stability which in turn promotes autophagosome maturation. Interacts with RAB39A (GTP-bound); the interaction promotes autophagosome-lysosome membrane fusion driven by STX17-SNAP29-VAMP8. Interacts with RAB39B; the interaction may promote a different fonction in autophagy as compared with RAB39A. Phosphorylated at Tyr-157 probably by ABL1. Dephosphorylation by PTPN2; regulates exit from the endoplasmic reticulum.

It localises to the endoplasmic reticulum membrane. The protein localises to the smooth endoplasmic reticulum membrane. The protein resides in the endoplasmic reticulum-Golgi intermediate compartment membrane. It is found in the cytoplasmic vesicle. Its subcellular location is the autophagosome membrane. It localises to the COPII-coated vesicle membrane. The protein localises to the cytoplasm. The protein resides in the cytosol. It is found in the mitochondrion membrane. Its subcellular location is the autolysosome membrane. In terms of biological role, SNAREs, soluble N-ethylmaleimide-sensitive factor-attachment protein receptors, are essential proteins for fusion of cellular membranes. SNAREs localized on opposing membranes assemble to form a trans-SNARE complex, an extended, parallel four alpha-helical bundle that drives membrane fusion. STX17 is a SNARE of the autophagosome involved in autophagy through the direct control of autophagosome membrane fusion with the lysosome membrane. May also play a role in the early secretory pathway where it may maintain the architecture of the endoplasmic reticulum-Golgi intermediate compartment/ERGIC and Golgi and/or regulate transport between the endoplasmic reticulum, the ERGIC and the Golgi. The polypeptide is Syntaxin-17 (Bos taurus (Bovine)).